Here is a 1080-residue protein sequence, read N- to C-terminus: Carbamoyl phosphate synthase large chain (1080 aa).

The segment at 1-403 (MPKRTDLETI…SLQKALRGLE (403 aa)) is carboxyphosphate synthetic domain. The ATP site is built by arginine 129, arginine 169, glycine 175, glycine 176, glutamate 208, valine 210, glutamate 215, glycine 241, valine 242, histidine 243, glutamine 285, and glutamate 299. The ATP-grasp 1 domain maps to 133-328 (RVAMGEIGLD…IAKVAAKLAV (196 aa)). Residues glutamine 285, glutamate 299, and asparagine 301 each coordinate Mg(2+). Mn(2+) is bound by residues glutamine 285, glutamate 299, and asparagine 301. Residues 404–554 (TGKIGLDPTG…YSTYEDECEA (151 aa)) are oligomerization domain. The interval 555-942 (LPTDRDKIMI…AFARAQEAGG (388 aa)) is carbamoyl phosphate synthetic domain. In terms of domain architecture, ATP-grasp 2 spans 679–876 (QQLVDKLGLK…LAKIAARCMA (198 aa)). Residues arginine 715, arginine 754, leucine 756, glutamate 761, glycine 787, valine 788, histidine 789, serine 790, glutamine 830, and glutamate 847 each contribute to the ATP site. Residues glutamine 830, glutamate 847, and asparagine 849 each contribute to the Mg(2+) site. Mn(2+)-binding residues include glutamine 830, glutamate 847, and asparagine 849. An MGS-like domain is found at 943-1080 (IKAPPLGKAF…LQELHKELEA (138 aa)). The interval 943–1080 (IKAPPLGKAF…LQELHKELEA (138 aa)) is allosteric domain.

This sequence belongs to the CarB family. Composed of two chains; the small (or glutamine) chain promotes the hydrolysis of glutamine to ammonia, which is used by the large (or ammonia) chain to synthesize carbamoyl phosphate. Tetramer of heterodimers (alpha,beta)4. Requires Mg(2+) as cofactor. It depends on Mn(2+) as a cofactor.

The enzyme catalyses hydrogencarbonate + L-glutamine + 2 ATP + H2O = carbamoyl phosphate + L-glutamate + 2 ADP + phosphate + 2 H(+). The catalysed reaction is hydrogencarbonate + NH4(+) + 2 ATP = carbamoyl phosphate + 2 ADP + phosphate + 2 H(+). The protein operates within amino-acid biosynthesis; L-arginine biosynthesis; carbamoyl phosphate from bicarbonate: step 1/1. It participates in pyrimidine metabolism; UMP biosynthesis via de novo pathway; (S)-dihydroorotate from bicarbonate: step 1/3. In terms of biological role, large subunit of the glutamine-dependent carbamoyl phosphate synthetase (CPSase). CPSase catalyzes the formation of carbamoyl phosphate from the ammonia moiety of glutamine, carbonate, and phosphate donated by ATP, constituting the first step of 2 biosynthetic pathways, one leading to arginine and/or urea and the other to pyrimidine nucleotides. The large subunit (synthetase) binds the substrates ammonia (free or transferred from glutamine from the small subunit), hydrogencarbonate and ATP and carries out an ATP-coupled ligase reaction, activating hydrogencarbonate by forming carboxy phosphate which reacts with ammonia to form carbamoyl phosphate. The polypeptide is Carbamoyl phosphate synthase large chain (Xanthomonas axonopodis pv. citri (strain 306)).